The following is a 144-amino-acid chain: MALERTLSIIKPDAMEKNTAGAIVARLEQEGFTVKAMKRIHLTRAEAEGFYAEHRGRGFFDELVTFMSRSPILVMALEREDAVAKYREVIGATDPAKAAAGTIRKLYGANVGENAVHGSDKPATAAREIAYFFAGYEVAPSATA.

Residues K11, F59, R87, T93, R104, and N114 each contribute to the ATP site. Residue H117 is the Pros-phosphohistidine intermediate of the active site.

The protein belongs to the NDK family. As to quaternary structure, homotetramer. It depends on Mg(2+) as a cofactor.

It is found in the cytoplasm. The enzyme catalyses a 2'-deoxyribonucleoside 5'-diphosphate + ATP = a 2'-deoxyribonucleoside 5'-triphosphate + ADP. The catalysed reaction is a ribonucleoside 5'-diphosphate + ATP = a ribonucleoside 5'-triphosphate + ADP. In terms of biological role, major role in the synthesis of nucleoside triphosphates other than ATP. The ATP gamma phosphate is transferred to the NDP beta phosphate via a ping-pong mechanism, using a phosphorylated active-site intermediate. This chain is Nucleoside diphosphate kinase, found in Sorangium cellulosum (strain So ce56) (Polyangium cellulosum (strain So ce56)).